The sequence spans 278 residues: Protein mtd-1 (278 aa).

The first 17 residues, 1-17, serve as a signal peptide directing secretion; that stretch reads MRSSLLLLVFFLSIGWA. The Extracellular portion of the chain corresponds to 18 to 254; the sequence is RYCVHNEKSW…EMLEEIEARK (237 aa). Residues Asn40, Asn73, Asn163, and Asn190 are each glycosylated (N-linked (GlcNAc...) asparagine). Residues 255-271 form a helical membrane-spanning segment; that stretch reads VPVDSSAPVNIILSIAF. Over 272–278 the chain is Cytoplasmic; it reads SIFLIHF.

It localises to the cell membrane. Its function is as follows. Plays a role in mechanosensory transduction (touch sensitivity). In Caenorhabditis elegans, this protein is Protein mtd-1.